Reading from the N-terminus, the 164-residue chain is SsrA-binding protein (164 aa).

Residues 141-164 are disordered; that stretch reads KLHDKRQDEKQKSIKREINSALKR. A compositionally biased stretch (basic and acidic residues) spans 145-158; the sequence is KRQDEKQKSIKREI.

The protein belongs to the SmpB family.

The protein localises to the cytoplasm. Required for rescue of stalled ribosomes mediated by trans-translation. Binds to transfer-messenger RNA (tmRNA), required for stable association of tmRNA with ribosomes. tmRNA and SmpB together mimic tRNA shape, replacing the anticodon stem-loop with SmpB. tmRNA is encoded by the ssrA gene; the 2 termini fold to resemble tRNA(Ala) and it encodes a 'tag peptide', a short internal open reading frame. During trans-translation Ala-aminoacylated tmRNA acts like a tRNA, entering the A-site of stalled ribosomes, displacing the stalled mRNA. The ribosome then switches to translate the ORF on the tmRNA; the nascent peptide is terminated with the 'tag peptide' encoded by the tmRNA and targeted for degradation. The ribosome is freed to recommence translation, which seems to be the essential function of trans-translation. This chain is SsrA-binding protein, found in Prochlorococcus marinus (strain MIT 9215).